An 802-amino-acid chain; its full sequence is Mitogen-activated protein kinase kinase kinase 20 (802 aa).

At Ser-2 the chain carries N-acetylserine. Phosphoserine occurs at positions 2, 3, and 7. Residues 16–277 form the Protein kinase domain; the sequence is LQFFENCGGG…NLPDQCNSFL (262 aa). ATP contacts are provided by residues 22-30 and Lys-45; that span reads CGGGSFGSV. The Proton acceptor role is filled by Asp-133. Position 161 is a phosphothreonine; by autocatalysis (Thr-161). Position 165 is a phosphoserine; by autocatalysis (Ser-165). 2 positions are modified to phosphoserine: Ser-275 and Ser-302. Positions 287–308 are leucine-zipper; it reads IEATLERLKKLERDLSFKEQEL. The SAM domain occupies 339 to 410; the sequence is WTEDDVYFWV…KSAIEKLTHD (72 aa). 3 positions are modified to phosphoserine: Lys-434, Gln-453, and Ser-567. Thr-586 bears the Phosphothreonine mark. Phosphoserine occurs at positions 587, 593, and 599. The segment covering 624 to 642 has biased composition (polar residues); it reads YQQITPSINPSRSSSPTQY. Residues 624 to 802 form a disordered region; sequence YQQITPSINP…RGNYRGRRNF (179 aa). Thr-628 is subject to Phosphothreonine. Phosphoserine occurs at positions 634, 638, 649, 650, and 661. The segment covering 643–666 has biased composition (low complexity); that stretch reads GLSRNFSSLNLSSRDSGFSSLNDS. Residues 667 to 678 show a composition bias toward basic and acidic residues; sequence SSERGRYSDRSR. The interval 670 to 713 is sensing domain (S); the sequence is RGRYSDRSRNKYYRGSVSLNSSPKGRYGGKSQHSTPSRERYSGK. A phosphoserine mark is found at Ser-685, Ser-720, Ser-727, and Ser-733. A compositionally biased stretch (basic and acidic residues) spans 728–741; sequence PDFKRSPNDHDRRV. A Phosphothreonine modification is found at Thr-744. A C-terminal domain (CTD) region spans residues 776–802; sequence RKKTHRQLSAKTSKERTRGNYRGRRNF.

The protein belongs to the protein kinase superfamily. STE Ser/Thr protein kinase family. MAP kinase kinase kinase subfamily. As to quaternary structure, homodimer. Interacts with ZNF33A. Component of a signaling complex containing at least AKAP13, PKN1, MAPK14, MAP3K20 and MAP2K3. Within this complex, AKAP13 interacts directly with PKN1, which in turn recruits MAPK14, MAP2K3 and MAP3K20. Interacts with EIF2AK4/GCN2; promoting EIF2AK4/GCN2 kinase activity. Interacts with isoform ZAKbeta. In terms of assembly, interacts with isoform ZAKalpha. Mg(2+) serves as cofactor. Post-translationally, activated by phosphorylation by PKN1, followed by autophosphorylation on Thr-161 and Ser-165. Autophosphorylation in response to ribotoxic stress promotes dissociation from colliding ribosomes and activation.

The protein resides in the cytoplasm. It is found in the nucleus. It catalyses the reaction L-seryl-[protein] + ATP = O-phospho-L-seryl-[protein] + ADP + H(+). The catalysed reaction is L-threonyl-[protein] + ATP = O-phospho-L-threonyl-[protein] + ADP + H(+). Its activity is regulated as follows. Activated in response to stress, such as ribosomal stress, osmotic shock and ionizing radiation. Activated by phosphorylation by PKN1, followed by autophosphorylation on Thr-161 and Ser-165. In terms of biological role, stress-activated component of a protein kinase signal transduction cascade that promotes programmed cell death in response to various stress, such as ribosomal stress, osmotic shock and ionizing radiation. Acts by catalyzing phosphorylation of MAP kinase kinases, leading to activation of the JNK (MAPK8/JNK1, MAPK9/JNK2 and/or MAPK10/JNK3) and MAP kinase p38 (MAPK11, MAPK12, MAPK13 and/or MAPK14) pathways. Activates JNK through phosphorylation of MAP2K4/MKK4 and MAP2K7/MKK7, and MAP kinase p38 gamma (MAPK12) via phosphorylation of MAP2K3/MKK3 and MAP2K6/MKK6. Involved in stress associated with adrenergic stimulation: contributes to cardiac decompensation during periods of acute cardiac stress. May be involved in regulation of S and G2 cell cycle checkpoint by mediating phosphorylation of CHEK2. Functionally, key component of the stress-activated protein kinase signaling cascade in response to ribotoxic stress or UV-B irradiation. Acts as the proximal sensor of ribosome collisions during the ribotoxic stress response (RSR). Directly binds to the ribosome by inserting its flexible C-terminus into the ribosomal intersubunit space, thereby acting as a sentinel for colliding ribosomes. Upon ribosome collisions, activates either the stress-activated protein kinase signal transduction cascade or the integrated stress response (ISR), leading to programmed cell death or cell survival, respectively. Dangerous levels of ribosome collisions trigger the autophosphorylation and activation of MAP3K20, which dissociates from colliding ribosomes and phosphorylates MAP kinase kinases, leading to activation of the JNK and MAP kinase p38 pathways that promote programmed cell death. Less dangerous levels of ribosome collisions trigger the integrated stress response (ISR): MAP3K20 activates EIF2AK4/GCN2 independently of its protein-kinase activity, promoting EIF2AK4/GCN2-mediated phosphorylation of EIF2S1/eIF-2-alpha. Also acts as a histone kinase by phosphorylating histone H3 at 'Ser-28' (H3S28ph). Its function is as follows. Isoform that lacks the C-terminal region that mediates ribosome-binding: does not act as a sensor of ribosome collisions in response to ribotoxic stress. May act as an antagonist of isoform ZAKalpha: interacts with isoform ZAKalpha, leading to decrease the expression of isoform ZAKalpha. The chain is Mitogen-activated protein kinase kinase kinase 20 from Mus musculus (Mouse).